A 508-amino-acid chain; its full sequence is Cytochrome P450 4A12 (508 aa).

The next 2 membrane-spanning stretches (helical) occupy residues 10–30 (IFPG…VLLL) and 120–140 (FLAP…WFQH). Residue Glu319 coordinates heme. The residue at position 438 (Ser438) is a Phosphoserine. Position 455 (Cys455) interacts with heme.

The protein belongs to the cytochrome P450 family. Requires heme as cofactor. In terms of tissue distribution, expressed at proximal straight tubules and preglomerular arteries of the outer medulla as well in the cortex regions of kidney (at protein level).

The protein localises to the endoplasmic reticulum membrane. It localises to the microsome membrane. The catalysed reaction is an organic molecule + reduced [NADPH--hemoprotein reductase] + O2 = an alcohol + oxidized [NADPH--hemoprotein reductase] + H2O + H(+). The enzyme catalyses dodecanoate + reduced [NADPH--hemoprotein reductase] + O2 = 12-hydroxydodecanoate + oxidized [NADPH--hemoprotein reductase] + H2O + H(+). It catalyses the reaction dodecanoate + reduced [NADPH--hemoprotein reductase] + O2 = (11R)-hydroxydodecanoate + oxidized [NADPH--hemoprotein reductase] + H2O + H(+). It carries out the reaction (5Z,8Z,11Z,14Z)-eicosatetraenoate + reduced [NADPH--hemoprotein reductase] + O2 = 20-hydroxy-(5Z,8Z,11Z,14Z)-eicosatetraenoate + oxidized [NADPH--hemoprotein reductase] + H2O + H(+). The catalysed reaction is prostaglandin A1 + reduced [NADPH--hemoprotein reductase] + O2 = 20-hydroxy prostaglandin A1 + oxidized [NADPH--hemoprotein reductase] + H2O + H(+). The protein operates within lipid metabolism; fatty acid metabolism. Activated by cytochrome b5 and phosphatidylserine. Its function is as follows. A cytochrome P450 monooxygenase involved in the metabolism of fatty acids. Catalyzes predominantly the oxidation of the terminal carbon (omega-oxidation) of saturated and unsaturated fatty acids. May act as a major omega-hydroxylase for dodecanoic (lauric) acid in kidney. At preglomerular arteries, may participate in omega-hydroxylation of (5Z,8Z,11Z,14Z)-eicosatetraenoic acid (arachidonate) to 20-hydroxyeicosatetraenoic acid (20-HETE), a signaling molecule acting both as vasoconstrictive and natriuretic with overall effect on arterial blood pressure. Can also catalyze the oxidation of the penultimate carbon (omega-1 oxidation) of fatty acids with lower efficiency, displaying a preference for the (R)-stereoisomer. Mechanistically, uses molecular oxygen inserting one oxygen atom into a substrate, and reducing the second into a water molecule, with two electrons provided by NADPH via cytochrome P450 reductase (NADPH--hemoprotein reductase). This is Cytochrome P450 4A12 (Cyp4a12) from Rattus norvegicus (Rat).